A 167-amino-acid polypeptide reads, in one-letter code: cAMP-dependent protein kinase type I-alpha regulatory subunit (167 aa).

T12 is modified (phosphothreonine). A phosphoserine mark is found at S14 and S20. A Pseudophosphorylation motif motif is present at residues 30–33 (RGAI). S34 carries the phosphoserine modification. 3',5'-cyclic AMP contacts are provided by residues 51–78 (LFSH…SKVS), 79–167 (ILES…ILKR), E147, and R156. S82 carries the phosphoserine modification.

This sequence belongs to the cAMP-dependent kinase regulatory chain family. The inactive holoenzyme is composed of two regulatory chains and two catalytic chains. Activation by cAMP releases the two active catalytic monomers and the regulatory dimer. Interacts with PRKACA and PRKACB. PRKAR1A also interacts with RFC2; the complex may be involved in cell survival. Interacts with AKAP4. Interacts with RARA; the interaction occurs in the presence of cAMP or FSH and regulates RARA transcriptional activity. Interacts with the phosphorylated form of PJA2. Interacts with CBFA2T3. Interacts with PRKX; regulates this cAMP-dependent protein kinase. Interacts with smAKAP; this interaction may target PRKAR1A to the plasma membrane. Interacts with AICDA. Post-translationally, the pseudophosphorylation site binds to the substrate-binding region of the catalytic chain, resulting in the inhibition of its activity.

The protein resides in the cell membrane. In terms of biological role, regulatory subunit of the cAMP-dependent protein kinases involved in cAMP signaling in cells. This chain is cAMP-dependent protein kinase type I-alpha regulatory subunit, found in Mesocricetus auratus (Golden hamster).